A 193-amino-acid chain; its full sequence is Imidazoleglycerol-phosphate dehydratase (193 aa).

This sequence belongs to the imidazoleglycerol-phosphate dehydratase family.

It is found in the cytoplasm. The catalysed reaction is D-erythro-1-(imidazol-4-yl)glycerol 3-phosphate = 3-(imidazol-4-yl)-2-oxopropyl phosphate + H2O. Its pathway is amino-acid biosynthesis; L-histidine biosynthesis; L-histidine from 5-phospho-alpha-D-ribose 1-diphosphate: step 6/9. The chain is Imidazoleglycerol-phosphate dehydratase from Saccharolobus islandicus (strain M.16.27) (Sulfolobus islandicus).